Reading from the N-terminus, the 303-residue chain is Protein SULFUR DEFICIENCY-INDUCED 2 (303 aa).

Residues 62–89 (RVDSALKDMALLMKQQNRAEEAIDAIQS) are a coiled coil. TPR repeat units follow at residues 64–97 (DSALKDMALLMKQQNRAEEAIDAIQSFRDLCSRQ), 100–133 (ESLDNVLIDLYKKCGRIEEQVELLKQKLWMIYQG), 160–193 (SRILGNLGWAYMQLMDYTAAEAVYRKAQLIEPDA), and 195–226 (KACNLCTCLIKQGKHDEARSILFRDVLMENKE). A coiled-coil region spans residues 232 to 253 (RLMARVQELLSELKPQEEEAAA).

Belongs to the MS5 protein family.

The protein resides in the nucleus. Functionally, involved in the utilization of stored sulfate under sulfur-deficient conditions. The polypeptide is Protein SULFUR DEFICIENCY-INDUCED 2 (Arabidopsis thaliana (Mouse-ear cress)).